Consider the following 212-residue polypeptide: Protein GrpE (212 aa).

The disordered stretch occupies residues 1-68; it reads MAETSNNKTS…ELESAKKEIE (68 aa). A compositionally biased stretch (basic and acidic residues) spans 9-30; that stretch reads TSEEAKANEKKSQSETLEESKL. The span at 40 to 60 shows a compositional bias: low complexity; sequence ETTQTESMETAETETSLQTEL.

Belongs to the GrpE family. Homodimer.

It is found in the cytoplasm. In terms of biological role, participates actively in the response to hyperosmotic and heat shock by preventing the aggregation of stress-denatured proteins, in association with DnaK and GrpE. It is the nucleotide exchange factor for DnaK and may function as a thermosensor. Unfolded proteins bind initially to DnaJ; upon interaction with the DnaJ-bound protein, DnaK hydrolyzes its bound ATP, resulting in the formation of a stable complex. GrpE releases ADP from DnaK; ATP binding to DnaK triggers the release of the substrate protein, thus completing the reaction cycle. Several rounds of ATP-dependent interactions between DnaJ, DnaK and GrpE are required for fully efficient folding. This is Protein GrpE from Leptospira interrogans serogroup Icterohaemorrhagiae serovar copenhageni (strain Fiocruz L1-130).